A 505-amino-acid chain; its full sequence is E3 SUMO-protein ligase PIAS4-A (505 aa).

The SAP domain maps to 12-46 (VKSFRVSDLQTLLASMGRSKSGLKQDLVGRALRLV). The LXXLL motif motif lies at 20-24 (LQTLL). Residue Lys35 forms a Glycyl lysine isopeptide (Lys-Gly) (interchain with G-Cter in SUMO); alternate linkage. Lys35 is covalently cross-linked (Glycyl lysine isopeptide (Lys-Gly) (interchain with G-Cter in SUMO2); alternate). Residues Lys56 and Lys68 each participate in a glycyl lysine isopeptide (Lys-Gly) (interchain with G-Cter in SUMO2) cross-link. A PINIT domain is found at 104-264 (GIPKPAPPPA…SVAVYLVRVF (161 aa)). The SP-RING-type zinc finger occupies 296–381 (PESEIATTGL…LKETPEDVEE (86 aa)). The Zn(2+) site is built by Cys327, His329, Cys350, and Cys353. The interval 374 to 505 (ETPEDVEEIE…DYDKDLVTAY (132 aa)) is required for nuclear localization. The segment covering 395 to 407 (DDKEKERERENSR) has biased composition (basic and acidic residues). Positions 395-505 (DDKEKERERE…DYDKDLVTAY (111 aa)) are disordered. Gly residues predominate over residues 437–457 (SGSGGASAGTGSTSGGSGGGT). Positions 462–485 (TLDDSSEEEGGGGAEDSEETDDSQ) are enriched in acidic residues. The span at 493–505 (GRYDYDKDLVTAY) shows a compositional bias: basic and acidic residues.

Belongs to the PIAS family. Sumoylated. Lys-35 is the main site of sumoylation. As to expression, highly expressed in spleen, liver, and brain. Expressed at lower levels in heart, intestine, kidney, gill, skin, and muscle.

The protein localises to the nucleus. It carries out the reaction S-ubiquitinyl-[E2 ubiquitin-conjugating enzyme]-L-cysteine + [acceptor protein]-L-lysine = [E2 ubiquitin-conjugating enzyme]-L-cysteine + N(6)-ubiquitinyl-[acceptor protein]-L-lysine.. The protein operates within protein modification; protein sumoylation. Functionally, functions as an E3-type small ubiquitin-like modifier (SUMO) ligase. May play a role as a transcriptional coregulator in various cellular pathways. Catalyzes conjugation of SUMO2 to KAT5 in response to DNA damage, facilitating repair of DNA double-strand breaks (DSBs) via homologous recombination (HR). Mediates sumoylation of PARP1 in response to PARP1 trapping to chromatin. Negatively regulates induction of interferon phi 1 (ifnphi1) mediated by mavs and ticam1/trif. Also inhibits ifnphi1-mediated activation of the interferon-stimulated genes (ISGs) pkz and cd40, and to a lesser extent rsad2 and isg15. May inhibit ticam1/trif-mediated activation of NF-kappa-B. This chain is E3 SUMO-protein ligase PIAS4-A, found in Danio rerio (Zebrafish).